The primary structure comprises 61 residues: Large ribosomal subunit protein uL30 (61 aa).

The protein belongs to the universal ribosomal protein uL30 family. In terms of assembly, part of the 50S ribosomal subunit.

This chain is Large ribosomal subunit protein uL30, found in Methylococcus capsulatus (strain ATCC 33009 / NCIMB 11132 / Bath).